Reading from the N-terminus, the 382-residue chain is Sphingoid long-chain base transporter RSB1 (382 aa).

Over 1–34 (MSNATNNTLGSLLPQLEAAANSNSLYGGMVPNLR) the chain is Extracellular. N-linked (GlcNAc...) asparagine glycosylation is found at asparagine 3 and asparagine 6. Residues 35-55 (FNITMIVIWGILLTIHVVQLL) form a helical membrane-spanning segment. At 56–57 (MR) the chain is on the cytoplasmic side. Residues 58–78 (QYWFSIAFICTGILEVLGYIG) traverse the membrane as a helical segment. The Extracellular segment spans residues 79 to 90 (RTWSHSNVADMD). A helical membrane pass occupies residues 91–111 (AFLLNMICLTIAPVFTMGGIY). The Cytoplasmic portion of the chain corresponds to 112-135 (YQLAKLIEVYGHRFSLLPSPMAYS). Residues 136–156 (FIFICSDIVSLVVQAVGGGLC) form a helical membrane-spanning segment. The Extracellular segment spans residues 157-171 (GVAVTDGTSTTTGNH). Residues 172–192 (VFIAGLAIQVASMAIFLMLWF) form a helical membrane-spanning segment. At 193-241 (HFLFRIYISVRWEHINSRPISLSLLKISQTEVDYLYREKFHFLRLEPKR) the chain is on the cytoplasmic side. A helical transmembrane segment spans residues 242 to 262 (WVFHYFNLAMTVAVLTIFTRC). The Extracellular portion of the chain corresponds to 263–281 (CYRLAELVVGWDGYLITHE). A helical transmembrane segment spans residues 282–302 (WYFIILDALMMAIATVTLTIF). The Cytoplasmic portion of the chain corresponds to 303-382 (HPGFAFKGRS…LFSSKKKAKL (80 aa)).

This sequence belongs to the lipid-translocating exporter (LTE) (TC 9.A.26.1) family.

It localises to the cell membrane. Its function is as follows. Catalyzes the ATP-dependent translocation of sphingoid long-chain bases (LCBs) from the cytoplasmic site toward the extracytoplasmic side of the membrane (flip-flop). Involved in the establishment of the functional lipid asymmetry of the plasma membrane. Regulates intracellular levels of LCBs, sphingolipid precursors that are growth inhibitory at increased levels. The sequence is that of Sphingoid long-chain base transporter RSB1 (RSB1) from Saccharomyces cerevisiae (strain Lalvin EC1118 / Prise de mousse) (Baker's yeast).